Consider the following 97-residue polypeptide: Nucleoid-associated protein HP_0035 (97 aa).

This sequence belongs to the YbaB/EbfC family. Homodimer.

Its subcellular location is the cytoplasm. It localises to the nucleoid. Its function is as follows. Binds to DNA and alters its conformation. May be involved in regulation of gene expression, nucleoid organization and DNA protection. The chain is Nucleoid-associated protein HP_0035 from Helicobacter pylori (strain ATCC 700392 / 26695) (Campylobacter pylori).